Here is a 212-residue protein sequence, read N- to C-terminus: Interleukin-6 (212 aa).

The first 27 residues, 1-27 (MNSVSTSAFGPVAFSLGLLLVLPAAFP), serve as a signal peptide directing secretion. Cysteine 72 and cysteine 78 are joined by a disulfide. Asparagine 73 carries an N-linked (GlcNAc...) asparagine glycan. Serine 81 carries the post-translational modification Phosphoserine. Residues cysteine 101 and cysteine 111 are joined by a disulfide bond. Asparagine 172 carries an N-linked (GlcNAc...) asparagine glycan.

Belongs to the IL-6 superfamily. As to quaternary structure, component of a hexamer of two molecules each of IL6, IL6R and IL6ST; first binds to IL6R to associate with the signaling subunit IL6ST. Interacts with IL6R (via the N-terminal ectodomain); this interaction may be affected by IL6R-binding with SORL1, hence decreasing IL6 cis signaling. Interacts with SORL1 (via the N-terminal ectodomain); this interaction leads to IL6 internalization and lysosomal degradation. May form a trimeric complex with the soluble SORL1 ectodomain and soluble IL6R receptor; this interaction might stabilize circulating IL6, hence promoting IL6 trans signaling.

The protein localises to the secreted. In terms of biological role, cytokine with a wide variety of biological functions in immunity, tissue regeneration, and metabolism. Binds to IL6R, then the complex associates to the signaling subunit IL6ST/gp130 to trigger the intracellular IL6-signaling pathway. The interaction with the membrane-bound IL6R and IL6ST stimulates 'classic signaling', whereas the binding of IL6 and soluble IL6R to IL6ST stimulates 'trans-signaling'. Alternatively, 'cluster signaling' occurs when membrane-bound IL6:IL6R complexes on transmitter cells activate IL6ST receptors on neighboring receiver cells. Its function is as follows. IL6 is a potent inducer of the acute phase response. Rapid production of IL6 contributes to host defense during infection and tissue injury, but excessive IL6 synthesis is involved in disease pathology. In the innate immune response, is synthesized by myeloid cells, such as macrophages and dendritic cells, upon recognition of pathogens through toll-like receptors (TLRs) at the site of infection or tissue injury. In the adaptive immune response, is required for the differentiation of B cells into immunoglobulin-secreting cells. Plays a major role in the differentiation of CD4(+) T cell subsets. Essential factor for the development of T follicular helper (Tfh) cells that are required for the induction of germinal-center formation. Required to drive naive CD4(+) T cells to the Th17 lineage. Also required for proliferation of myeloma cells and the survival of plasmablast cells. Functionally, acts as an essential factor in bone homeostasis and on vessels directly or indirectly by induction of VEGF, resulting in increased angiogenesis activity and vascular permeability. Induces, through 'trans-signaling' and synergistically with IL1B and TNF, the production of VEGF. Involved in metabolic controls, is discharged into the bloodstream after muscle contraction increasing lipolysis and improving insulin resistance. 'Trans-signaling' in central nervous system also regulates energy and glucose homeostasis. Mediates, through GLP-1, crosstalk between insulin-sensitive tissues, intestinal L cells and pancreatic islets to adapt to changes in insulin demand. Also acts as a myokine. Plays a protective role during liver injury, being required for maintenance of tissue regeneration. Also has a pivotal role in iron metabolism by regulating HAMP/hepcidin expression upon inflammation or bacterial infection. Through activation of IL6ST-YAP-NOTCH pathway, induces inflammation-induced epithelial regeneration. The protein is Interleukin-6 (IL6) of Macaca thibetana (Pere David's macaque).